A 206-amino-acid polypeptide reads, in one-letter code: tRNA(Phe) 7-((3-amino-3-carboxypropyl)-4-demethylwyosine(37)-N(4))-methyltransferase 2 (206 aa).

This sequence belongs to the TYW3 family.

The catalysed reaction is 4-demethyl-7-[(3S)-3-amino-3-carboxypropyl]wyosine(37) in tRNA(Phe) + S-adenosyl-L-methionine = 7-[(3S)-3-amino-3-carboxypropyl]wyosine(37) in tRNA(Phe) + S-adenosyl-L-homocysteine + H(+). In terms of biological role, S-adenosyl-L-methionine-dependent methyltransferase that acts as a component of the wyosine derivatives biosynthesis pathway. Probably methylates N-4 position of wybutosine-86 to produce wybutosine-72. This is tRNA(Phe) 7-((3-amino-3-carboxypropyl)-4-demethylwyosine(37)-N(4))-methyltransferase 2 from Pyrococcus horikoshii (strain ATCC 700860 / DSM 12428 / JCM 9974 / NBRC 100139 / OT-3).